The primary structure comprises 360 residues: Protein RecA (360 aa).

Position 66–73 (66–73 (GPESSGKT)) interacts with ATP. A disordered region spans residues 330 to 360 (DAKAIEERENPEKVKQDKEVPVNKDASDEKK).

This sequence belongs to the RecA family.

Its subcellular location is the cytoplasm. In terms of biological role, can catalyze the hydrolysis of ATP in the presence of single-stranded DNA, the ATP-dependent uptake of single-stranded DNA by duplex DNA, and the ATP-dependent hybridization of homologous single-stranded DNAs. It interacts with LexA causing its activation and leading to its autocatalytic cleavage. This chain is Protein RecA, found in Lactobacillus johnsonii (strain CNCM I-12250 / La1 / NCC 533).